Consider the following 362-residue polypeptide: tRNA/tmRNA (uracil-C(5))-methyltransferase (362 aa).

S-adenosyl-L-methionine is bound by residues Gln186, Tyr214, Asn219, Glu235, and Asp295. Cys320 (nucleophile) is an active-site residue. The active-site Proton acceptor is the Glu354.

It belongs to the class I-like SAM-binding methyltransferase superfamily. RNA M5U methyltransferase family. TrmA subfamily.

It catalyses the reaction uridine(54) in tRNA + S-adenosyl-L-methionine = 5-methyluridine(54) in tRNA + S-adenosyl-L-homocysteine + H(+). The enzyme catalyses uridine(341) in tmRNA + S-adenosyl-L-methionine = 5-methyluridine(341) in tmRNA + S-adenosyl-L-homocysteine + H(+). Dual-specificity methyltransferase that catalyzes the formation of 5-methyluridine at position 54 (m5U54) in all tRNAs, and that of position 341 (m5U341) in tmRNA (transfer-mRNA). This chain is tRNA/tmRNA (uracil-C(5))-methyltransferase, found in Stutzerimonas stutzeri (strain A1501) (Pseudomonas stutzeri).